The following is a 367-amino-acid chain: GPN-loop GTPase 1 (367 aa).

GTP-binding positions include 15 to 22 and 18 to 23; these read GMAGSGKT and GSGKTT. A Gly-Pro-Asn (GPN)-loop; involved in dimer interface motif is present at residues 75-77; it reads GPN. 178 to 181 lines the GTP pocket; the sequence is NKCD. Positions 247-290 form a coiled coil; sequence EGMDDFLEAVKAKVKEYEEEYVPEMERMKEIQRQTKERQKEAQL. Residues 306 to 332 are disordered; the sequence is VGLTVSDAEDEYNGELVDPDEDDGLTA. Position 311 is a phosphoserine (S311). Acidic residues predominate over residues 312-332; it reads DAEDEYNGELVDPDEDDGLTA.

Belongs to the GPN-loop GTPase family. In terms of assembly, heterodimers with gpn2 or fet5/gpn3. Binds to RNA polymerase II (RNAPII).

It is found in the cytoplasm. Functionally, small GTPase required for proper nuclear import of RNA polymerase II (RNAPII). May act at an RNAP assembly step prior to nuclear import. This is GPN-loop GTPase 1 from Schizosaccharomyces pombe (strain 972 / ATCC 24843) (Fission yeast).